A 184-amino-acid chain; its full sequence is Shikimate kinase (184 aa).

17–22 (GAGKTT) contributes to the ATP binding site. T21 contacts Mg(2+). 3 residues coordinate substrate: D39, R63, and G85. Residue R123 coordinates ATP. R142 is a binding site for substrate.

The protein belongs to the shikimate kinase family. In terms of assembly, monomer. Mg(2+) serves as cofactor.

It localises to the cytoplasm. It catalyses the reaction shikimate + ATP = 3-phosphoshikimate + ADP + H(+). The protein operates within metabolic intermediate biosynthesis; chorismate biosynthesis; chorismate from D-erythrose 4-phosphate and phosphoenolpyruvate: step 5/7. Functionally, catalyzes the specific phosphorylation of the 3-hydroxyl group of shikimic acid using ATP as a cosubstrate. The chain is Shikimate kinase from Burkholderia thailandensis (strain ATCC 700388 / DSM 13276 / CCUG 48851 / CIP 106301 / E264).